Reading from the N-terminus, the 341-residue chain is Malate dehydrogenase 2, mitochondrial (341 aa).

The N-terminal 22 residues, 1–22 (MFRSMIVRSASPVKQGLLRRGF), are a transit peptide targeting the mitochondrion. NAD(+) contacts are provided by residues 36 to 42 (GAAGGIG) and aspartate 62. Positions 109 and 115 each coordinate substrate. Residues asparagine 122 and 145–147 (ISN) contribute to the NAD(+) site. Asparagine 147 and arginine 181 together coordinate substrate. The Proton acceptor role is filled by histidine 205. Methionine 256 provides a ligand contact to NAD(+).

Belongs to the LDH/MDH superfamily. MDH type 1 family. Homodimer. Expressed in rosette leaves at low levels.

The protein localises to the mitochondrion matrix. It carries out the reaction (S)-malate + NAD(+) = oxaloacetate + NADH + H(+). In terms of biological role, catalyzes a reversible NAD-dependent dehydrogenase reaction involved in central metabolism and redox homeostasis between organelle compartments. Required for carbon dioxide and energy partitioning in leaves. May limit photorespiration during the dark phase. Can convert 2-ketoglutarate to L-2-hydroxyglutarate in vitro. This is Malate dehydrogenase 2, mitochondrial from Arabidopsis thaliana (Mouse-ear cress).